A 762-amino-acid chain; its full sequence is ATP-dependent RNA helicase SUV3 homolog, mitochondrial (762 aa).

Residues 1–36 (MQNTRRCISLICVTRQPPSLRATYGAVAAARCLHRA) constitute a mitochondrion transit peptide. The Helicase ATP-binding domain maps to 181–321 (NARALTRKIV…ALELLQKICE (141 aa)). Residue 194 to 201 (GPTNSGKT) coordinates ATP. One can recognise a Helicase C-terminal domain in the interval 331–508 (RYDRLTELTV…PTADQIELYA (178 aa)). Positions 716-762 (EWDAQQVGQAAAASTSSKESQESPPDDSDDEDSYPGSYKKTRRKRRK) are disordered. Polar residues predominate over residues 721–730 (QVGQAAAAST). Over residues 739 to 748 (PPDDSDDEDS) the composition is skewed to acidic residues.

Belongs to the helicase family. Mg(2+) is required as a cofactor. The cofactor is Mn(2+).

Its subcellular location is the mitochondrion. The catalysed reaction is ATP + H2O = ADP + phosphate + H(+). Functionally, major helicase player in mitochondrial RNA metabolism and maintenance. Likely component of the mitochondrial degradosome (mtEXO) complex, that degrades 3' overhang double-stranded RNA with a 3'-to-5' directionality in an ATP-dependent manner. ATPase and ATP-dependent multisubstrate helicase, able to unwind double-stranded (ds) DNA and RNA, and RNA/DNA heteroduplexes in the 5'-to-3' direction. Regulates mRNA stability and is required for the correct processing and maturation of mitochondrial transcripts. This Drosophila pseudoobscura pseudoobscura (Fruit fly) protein is ATP-dependent RNA helicase SUV3 homolog, mitochondrial.